The sequence spans 52 residues: Proteinase inhibitor (52 aa).

Q1 bears the Pyrrolidone carboxylic acid mark. Disulfide bonds link C3–C40, C6–C24, C7–C36, and C13–C49.

Belongs to the protease inhibitor I20 (potato type II proteinase inhibitor) family.

It is found in the secreted. This chain is Proteinase inhibitor, found in Solanum melongena (Eggplant).